We begin with the raw amino-acid sequence, 130 residues long: Small ribosomal subunit protein uS9 (130 aa).

It belongs to the universal ribosomal protein uS9 family.

This chain is Small ribosomal subunit protein uS9, found in Cupriavidus necator (strain ATCC 17699 / DSM 428 / KCTC 22496 / NCIMB 10442 / H16 / Stanier 337) (Ralstonia eutropha).